The primary structure comprises 65 residues: Putative antitoxin PF2058 (65 aa).

It belongs to the UPF0165 family.

Functionally, possibly the antitoxin component of a type II toxin-antitoxin (TA) system. This Pyrococcus furiosus (strain ATCC 43587 / DSM 3638 / JCM 8422 / Vc1) protein is Putative antitoxin PF2058.